Reading from the N-terminus, the 656-residue chain is Protein O1 homolog (656 aa).

Residues 544 to 564 (FIKKVILANVIFEYIFTLIII) form a helical membrane-spanning segment.

Belongs to the chordopoxvirinae O1 family.

It localises to the membrane. The polypeptide is Protein O1 homolog (Vertebrata (FPV)).